Consider the following 144-residue polypeptide: Large ribosomal subunit protein uL16 (144 aa).

The protein belongs to the universal ribosomal protein uL16 family. As to quaternary structure, part of the 50S ribosomal subunit.

Functionally, binds 23S rRNA and is also seen to make contacts with the A and possibly P site tRNAs. The protein is Large ribosomal subunit protein uL16 of Bacillus cereus (strain ATCC 10987 / NRS 248).